The sequence spans 407 residues: Imidazolonepropionase (407 aa).

2 residues coordinate Fe(3+): His-75 and His-77. Residues His-75 and His-77 each contribute to the Zn(2+) site. 4-imidazolone-5-propanoate is bound by residues Arg-84, Tyr-142, and His-169. N-formimidoyl-L-glutamate is bound at residue Tyr-142. Residue His-232 participates in Fe(3+) binding. His-232 provides a ligand contact to Zn(2+). Gln-235 lines the 4-imidazolone-5-propanoate pocket. Asp-306 serves as a coordination point for Fe(3+). Asp-306 lines the Zn(2+) pocket. N-formimidoyl-L-glutamate contacts are provided by Asn-308 and Gly-310. Position 311 (Thr-311) interacts with 4-imidazolone-5-propanoate.

This sequence belongs to the metallo-dependent hydrolases superfamily. HutI family. The cofactor is Zn(2+). Fe(3+) is required as a cofactor.

The protein resides in the cytoplasm. The catalysed reaction is 4-imidazolone-5-propanoate + H2O = N-formimidoyl-L-glutamate. It participates in amino-acid degradation; L-histidine degradation into L-glutamate; N-formimidoyl-L-glutamate from L-histidine: step 3/3. In terms of biological role, catalyzes the hydrolytic cleavage of the carbon-nitrogen bond in imidazolone-5-propanoate to yield N-formimidoyl-L-glutamate. It is the third step in the universal histidine degradation pathway. This chain is Imidazolonepropionase, found in Rhodococcus jostii (strain RHA1).